The following is a 1027-amino-acid chain: Abnormal embryogenesis protein 30 (1027 aa).

2 WD repeats span residues 18–65 and 70–109; these read RTPF…IQAV and KLDSSVSALHFSPDGRFLAAATSKGIIHLLDVETGKVRFS. Disordered regions lie at residues 619-655 and 1005-1027; these read NDSSPFLEEDEGEPEQEEQKPDEEPEPEGEPQPACDL and AMDSGRDLTDNGESDEDEEDDDI. 2 stretches are compositionally biased toward acidic residues: residues 625-647 and 1014-1027; these read LEEDEGEPEQEEQKPDEEPEPEG and DNGESDEDEEDDDI.

Belongs to the APC4 family. The APC/C is probably composed of at least 12 subunits: apc-2, apc-10, apc-11, cdc-26, emb-1, emb-27, emb-30, mat-1, mat-2, mat-3, such-1 and gfi-3.

The protein operates within protein modification; protein ubiquitination. In terms of biological role, probable component of the anaphase promoting complex/cyclosome (APC/C), a cell cycle-regulated E3 ubiquitin ligase that controls progression through mitosis and the G1 phase of the cell cycle. The APC/C complex acts by mediating ubiquitination and subsequent degradation of target proteins. Developmental role in early embryogenesis and the metaphase to anaphase transition in oocyte and spermatocyte meiosis and mitosis in somatic and germ cells. Required for embryonic anterior-posterior axis formation. Negatively regulates ify-1 protein levels during meiosis I. Plays a role in regulating the abundance of glr-1 receptors in postmitotic neurons, which may in turn control animal locomotion. Involved in regulating GABA neurotransmitter release at neuromuscular junctions in GABA motor neurons. This Caenorhabditis elegans protein is Abnormal embryogenesis protein 30.